The sequence spans 99 residues: Nucleoid-associated protein EbfC (99 aa).

It belongs to the YbaB/EbfC family. As to quaternary structure, homodimer.

The protein localises to the cytoplasm. Its subcellular location is the nucleoid. Its function is as follows. Binds to DNA and alters its conformation. May be involved in regulation of gene expression, nucleoid organization and DNA protection. The protein is Nucleoid-associated protein EbfC of Borreliella afzelii (strain PKo) (Borrelia afzelii).